Here is a 463-residue protein sequence, read N- to C-terminus: 6-phosphofructo-2-kinase/fructose-2,6-bisphosphatase 3 (463 aa).

Residues 1–246 (MPLELTQSRV…VYYLMNIHWQ (246 aa)) are 6-phosphofructo-2-kinase. An ATP-binding site is contributed by 42-50 (GLPARGKTY). Beta-D-fructose 6-phosphate is bound by residues Arg75 and Arg99. Asp125 is a catalytic residue. Thr127 and Arg133 together coordinate beta-D-fructose 6-phosphate. Cys155 is an active-site residue. ATP is bound at residue 164–169 (NIMEVK). 3 residues coordinate beta-D-fructose 6-phosphate: Lys169, Arg191, and Tyr195. The fructose-2,6-bisphosphatase stretch occupies residues 247 to 463 (PRTIYLCRHG…PNPLMRSNSH (217 aa)). Residue Arg254 coordinates beta-D-fructose 2,6-bisphosphate. His255 (tele-phosphohistidine intermediate) is an active-site residue. The beta-D-fructose 2,6-bisphosphate site is built by Asn261 and Gly267. Glu324 acts as the Proton donor/acceptor in catalysis. Tyr335 contacts beta-D-fructose 2,6-bisphosphate. 346 to 349 (YALA) provides a ligand contact to ATP. Beta-D-fructose 2,6-bisphosphate-binding residues include Lys353, Tyr364, and Gln390. ATP-binding positions include 390 to 394 (QAVCV) and Tyr426. The tract at residues 444–463 (RERSEDAKKGPNPLMRSNSH) is disordered. At Ser462 the chain carries Phosphoserine; by AMPK and PKA.

It in the C-terminal section; belongs to the phosphoglycerate mutase family. In terms of assembly, homodimer. Forms a heterodimer with PFKFB2. Phosphorylation by AMPK stimulates activity. As to expression, brain.

It catalyses the reaction beta-D-fructose 2,6-bisphosphate + H2O = beta-D-fructose 6-phosphate + phosphate. It carries out the reaction beta-D-fructose 6-phosphate + ATP = beta-D-fructose 2,6-bisphosphate + ADP + H(+). Its function is as follows. Catalyzes both the synthesis and degradation of fructose 2,6-bisphosphate. The sequence is that of 6-phosphofructo-2-kinase/fructose-2,6-bisphosphatase 3 (PFKFB3) from Bos taurus (Bovine).